Here is a 187-residue protein sequence, read N- to C-terminus: Benzene 1,2-dioxygenase subunit beta (187 aa).

It belongs to the bacterial ring-hydroxylating dioxygenase beta subunit family. This dioxygenase system consists of four proteins: the two subunits of the hydroxylase component (BedC1 and BedC2), a ferredoxin (BedB) and a ferredoxin reductase (BedA).

It carries out the reaction benzene + NADH + O2 + H(+) = cis-1,2-dihydrobenzene-1,2-diol + NAD(+). It participates in aromatic compound metabolism; benzene degradation; catechol from benzene: step 1/2. Functionally, the beta subunit may be responsible for the substrate specificity of the enzyme. The protein is Benzene 1,2-dioxygenase subunit beta (bedC2) of Pseudomonas putida (Arthrobacter siderocapsulatus).